The primary structure comprises 1199 residues: Metabotropic glutamate receptor 1 (1199 aa).

A signal peptide spans 1–18 (MVRLLLIFFPMIFLEMSI). Topologically, residues 19-592 (LPRMPDRKVL…VRYLEWSDIE (574 aa)) are extracellular. C67 and C109 are oxidised to a cystine. Y74 provides a ligand contact to L-glutamate. Residue N98 is glycosylated (N-linked (GlcNAc...) asparagine). L-glutamate is bound by residues S165 and 186–188 (SAT). N223 is a glycosylation site (N-linked (GlcNAc...) asparagine). Y236 is an L-glutamate binding site. An intrachain disulfide couples C289 to C291. D318 contributes to the L-glutamate binding site. C378 and C394 are disulfide-bonded. N397 carries N-linked (GlcNAc...) asparagine glycosylation. K409 provides a ligand contact to L-glutamate. C432 and C439 are joined by a disulfide. N-linked (GlcNAc...) asparagine glycosylation is present at N515. A helical transmembrane segment spans residues 593–615 (SIIAIAFSCLGILVTLFVTLIFV). Residues 616-629 (LYRDTPVVKSSSRE) are Cytoplasmic-facing. A helical membrane pass occupies residues 630-650 (LCYIILAGIFLGYVCPFTLIA). At 651-658 (KPTTTSCY) the chain is on the extracellular side. C657 and C746 are joined by a disulfide. Residues 659 to 680 (LQRLLVGLSSAMCYSALVTKTN) form a helical membrane-spanning segment. Over 681-703 (RIARILAGSKKKICTRKPRFMSA) the chain is Cytoplasmic. The helical transmembrane segment at 704-727 (WAQVIIASILISVQLTLVVTLIIM) threads the bilayer. The Extracellular segment spans residues 728–750 (EPPMPILSYPSIKEVYLICNTSN). The chain crosses the membrane as a helical span at residues 751-772 (LGVVAPVGYNGLLIMSCTYYAF). The Cytoplasmic portion of the chain corresponds to 773–785 (KTRNVPANFNEAK). A helical membrane pass occupies residues 786–807 (YIAFTMYTTCIIWLAFVPIYFG). Topologically, residues 808 to 815 (SNYKIITT) are extracellular. A helical transmembrane segment spans residues 816-840 (CFAVSLSVTVALGCMFTPKMYIIIA). At 841–1199 (KPERNVRSAF…RDYKQSSSTL (359 aa)) the chain is on the cytoplasmic side. S853 is subject to Phosphoserine. T871 is subject to Phosphothreonine. Disordered regions lie at residues 882 to 905 (GAGN…QAPK), 959 to 1036 (EEDN…QPKS), and 1056 to 1081 (HAVL…PPQH). Residues 885–895 (NANSNGKSVSW) are compositionally biased toward polar residues. 2 positions are modified to phosphoserine: S894 and S969. The span at 1012–1033 (GLPPPLPQQQPQQPPPQQPPQQ) shows a compositional bias: pro residues. S1098 is modified (phosphoserine). Residues 1120-1177 (EREGNTEEDELEEEEDLPTASKLTPEDSPALTPPSPFRDSVASGSSVPSSPVSESVLC) are disordered. Residues 1125–1136 (TEEDELEEEEDL) are compositionally biased toward acidic residues. At S1147 the chain carries Phosphoserine. The residue at position 1151 (T1151) is a Phosphothreonine. Residue S1154 is modified to Phosphoserine. The segment covering 1159 to 1175 (SVASGSSVPSSPVSESV) has biased composition (low complexity).

This sequence belongs to the G-protein coupled receptor 3 family. Homodimer; disulfide-linked. The PPXXF motif binds HOMER1, HOMER2 and HOMER3. Interacts with TAMALIN. Interacts with RYR1, RYR2, ITPR1, SHANK1 and SHANK3. Interacts with SIAH1. In terms of tissue distribution, predominantly expressed in cerebellar Purkinje cells, CA2-CA3 pyramidal cells of the hippocampus, and mitral and tufted cells of the olfactory bulb.

Its subcellular location is the cell membrane. It is found in the postsynaptic cell membrane. The protein localises to the cell projection. The protein resides in the dendrite. G-protein coupled receptor for glutamate. Ligand binding causes a conformation change that triggers signaling via guanine nucleotide-binding proteins (G proteins) and modulates the activity of down-stream effectors. Signaling activates a phosphatidylinositol-calcium second messenger system. May participate in the central action of glutamate in the CNS, such as long-term potentiation in the hippocampus and long-term depression in the cerebellum. May function in the light response in the retina. Induces GRID1 and GRID2 cation-channel activation via GNAQ-PLC-PKC pathway in dopaminergic neurons and cerebellar Purkinje cell, respectively. The protein is Metabotropic glutamate receptor 1 (Grm1) of Rattus norvegicus (Rat).